The following is a 251-amino-acid chain: Probable transcriptional regulatory protein DehaBAV1_0421 (251 aa).

This sequence belongs to the TACO1 family.

Its subcellular location is the cytoplasm. The sequence is that of Probable transcriptional regulatory protein DehaBAV1_0421 from Dehalococcoides mccartyi (strain ATCC BAA-2100 / JCM 16839 / KCTC 5957 / BAV1).